Reading from the N-terminus, the 462-residue chain is Hydroxymethylglutaryl-CoA synthase (462 aa).

Glu-92 (proton donor/acceptor) is an active-site residue. The active-site Acyl-thioester intermediate is the Cys-124. Cys-124, Thr-167, Ser-219, His-257, Lys-266, Asn-327, and Ser-360 together coordinate (3S)-3-hydroxy-3-methylglutaryl-CoA. Residue His-257 is the Proton donor/acceptor of the active site. Lys-408 participates in a covalent cross-link: Glycyl lysine isopeptide (Lys-Gly) (interchain with G-Cter in SUMO).

The protein belongs to the thiolase-like superfamily. HMG-CoA synthase family. Post-translationally, ubiquitinated.

The catalysed reaction is acetoacetyl-CoA + acetyl-CoA + H2O = (3S)-3-hydroxy-3-methylglutaryl-CoA + CoA + H(+). It functions in the pathway metabolic intermediate biosynthesis; (R)-mevalonate biosynthesis; (R)-mevalonate from acetyl-CoA: step 2/3. Its function is as follows. This enzyme condenses acetyl-CoA with acetoacetyl-CoA to form HMG-CoA, which is the substrate for HMG-CoA reductase. This is Hydroxymethylglutaryl-CoA synthase from Caenorhabditis elegans.